The chain runs to 184 residues: Photosystem I assembly protein Ycf4 (184 aa).

The next 2 membrane-spanning stretches (helical) occupy residues 25–45 (ACIL…SYLG) and 57–77 (ILFV…LFIS).

It belongs to the Ycf4 family.

The protein resides in the plastid. Its subcellular location is the chloroplast thylakoid membrane. Functionally, seems to be required for the assembly of the photosystem I complex. The chain is Photosystem I assembly protein Ycf4 from Cycas taitungensis (Prince sago).